The following is a 451-amino-acid chain: Phenylalanine--tRNA ligase, mitochondrial (451 aa).

Residues 157–160 (SAHQ), Arg-179, 186–188 (QHY), and 193–195 (QLE) contribute to the substrate site. Residue Lys-202 is modified to N6-acetyllysine. Residues Glu-287 and Phe-312 each contribute to the substrate site. The FDX-ACB domain occupies 358–450 (SKYPAVFNDI…AVQLLGVEGR (93 aa)).

Belongs to the class-II aminoacyl-tRNA synthetase family. As to quaternary structure, monomer.

Its subcellular location is the mitochondrion matrix. It localises to the mitochondrion. The catalysed reaction is tRNA(Phe) + L-phenylalanine + ATP = L-phenylalanyl-tRNA(Phe) + AMP + diphosphate + H(+). Is responsible for the charging of tRNA(Phe) with phenylalanine in mitochondrial translation. To a lesser extent, also catalyzes direct attachment of m-Tyr (an oxidized version of Phe) to tRNA(Phe), thereby opening the way for delivery of the misacylated tRNA to the ribosome and incorporation of ROS-damaged amino acid into proteins. The protein is Phenylalanine--tRNA ligase, mitochondrial (Fars2) of Mus musculus (Mouse).